A 297-amino-acid polypeptide reads, in one-letter code: Probable endonuclease 4 (297 aa).

Zn(2+)-binding residues include His-68, His-109, Glu-144, Asp-178, His-181, His-213, Asp-226, His-228, and Glu-258.

This sequence belongs to the AP endonuclease 2 family. Zn(2+) serves as cofactor.

The catalysed reaction is Endonucleolytic cleavage to 5'-phosphooligonucleotide end-products.. In terms of biological role, endonuclease IV plays a role in DNA repair. It cleaves phosphodiester bonds at apurinic or apyrimidinic (AP) sites, generating a 3'-hydroxyl group and a 5'-terminal sugar phosphate. In Lysinibacillus sphaericus (strain C3-41), this protein is Probable endonuclease 4.